Here is a 233-residue protein sequence, read N- to C-terminus: Modulator of macroautophagy TMEM150B (233 aa).

Topologically, residues 1 to 7 (MWGYLSL) are cytoplasmic. Residues 8-28 (MPVFLAVWAISGVWIVFAIAV) traverse the membrane as a helical segment. Topologically, residues 29-51 (TNRTVDLSKGFPYISICGSFPPQ) are extracellular. The N-linked (GlcNAc...) asparagine glycan is linked to N30. Residues 52–72 (SCIFSQVLNMGAALAAWICIV) form a helical membrane-spanning segment. The Cytoplasmic portion of the chain corresponds to 73–84 (RYHQLRDWGVRR). The chain crosses the membrane as a helical span at residues 85 to 105 (WPNQLILWTGLLCALGTSVVG). Residues 106 to 116 (NFQEKNQRPTH) are Extracellular-facing. The helical transmembrane segment at 117–137 (LAGAFLAFILGNVYFWLQLLL) threads the bilayer. Residues 138–155 (WRLKRLPQPGAAWIGPLR) are Cytoplasmic-facing. Residues 156–176 (LGLCSVCTILIVAMIVLHACS) form a helical membrane-spanning segment. At 177–185 (LRSVSAACE) the chain is on the extracellular side. Residues 186-206 (WVVAMLLFALFGLLAVDFSAL) form a helical membrane-spanning segment. Over 207-233 (ESCTLCVQPWPSLSPPPASPISLPVQL) the chain is Cytoplasmic.

Belongs to the DRAM/TMEM150 family. As to expression, highly expressed in the colon and lung with comparatively high levels also detectable in the lymph nodes, placenta, duodenum, peripheral blood mononuclear cells and spleen.

The protein resides in the cell membrane. It localises to the endosome membrane. The protein localises to the cytoplasmic vesicle. It is found in the autophagosome membrane. Modulator of macroautophagy that causes accumulation of autophagosomes under basal conditions and enhances autophagic flux. Represses cell death and promotes long-term clonogenic survival of cells grown in the absence of glucose in a macroautophagy-independent manner. May have some role in extracellular matrix engulfment or growth factor receptor recycling, both of which can modulate cell survival. This is Modulator of macroautophagy TMEM150B from Homo sapiens (Human).